A 108-amino-acid chain; its full sequence is Ig kappa chain V-V region MOPC 173 (108 aa).

Positions 1-23 (DIQMTQTTSSLSASLGDRVTISC) are framework-1. An intrachain disulfide couples Cys-23 to Cys-88. The segment at 24–34 (SASQSIGNYLB) is complementarity-determining-1. The interval 35-49 (WYQQKPDGTVKLLIY) is framework-2. The tract at residues 50-56 (YTSSLHS) is complementarity-determining-2. The tract at residues 57–88 (GVPSRFSGSGSGTDYSLTISBLZPZBIATYYC) is framework-3. Residues 89-97 (QQYSKLPRT) are complementarity-determining-3. Positions 98-108 (FGGGTKLEIKR) are framework-4.

This chain is Ig kappa chain V-V region MOPC 173, found in Mus musculus (Mouse).